A 230-amino-acid polypeptide reads, in one-letter code: NAD(P)H-hydrate epimerase (230 aa).

Residues 11–223 (YAAADIRAAE…DVGLDLSGAT (213 aa)) enclose the YjeF N-terminal domain. A (6S)-NADPHX-binding site is contributed by 59–63 (NNGGD). N60 and D125 together coordinate K(+). (6S)-NADPHX-binding positions include 129–137 (GIGTTDSPA) and D165. A K(+)-binding site is contributed by S168.

This sequence belongs to the NnrE/AIBP family. K(+) serves as cofactor.

It catalyses the reaction (6R)-NADHX = (6S)-NADHX. It carries out the reaction (6R)-NADPHX = (6S)-NADPHX. Its function is as follows. Catalyzes the epimerization of the S- and R-forms of NAD(P)HX, a damaged form of NAD(P)H that is a result of enzymatic or heat-dependent hydration. This is a prerequisite for the S-specific NAD(P)H-hydrate dehydratase to allow the repair of both epimers of NAD(P)HX. The sequence is that of NAD(P)H-hydrate epimerase from Clavibacter michiganensis subsp. michiganensis (strain NCPPB 382).